The following is a 642-amino-acid chain: Kinesin-like protein KIF12 (642 aa).

Residues 1–13 (MEERGSPDGDPAR) show a composition bias toward basic and acidic residues. Residues 1–25 (MEERGSPDGDPARNLEQGPEGSETP) are disordered. Phosphoserine is present on Ser-6. The region spanning 25–360 (PIQVVLRVRP…LRYASRAQRI (336 aa)) is the Kinesin motor domain. Residue 104-111 (GQTGSGKT) coordinates ATP. Ser-369 carries the post-translational modification Phosphoserine. Residues 376 to 465 (QQVENELLRL…QVHDLERRLL (90 aa)) are a coiled coil. Disordered stretches follow at residues 531-561 (GHIS…SQSD) and 579-642 (PSAP…LSSC). The segment covering 538–548 (WPPPWAPPPSP) has biased composition (pro residues). Positions 610–642 (TLTQQINSSLHLSQRQPQPSEDTQSPGQGLSSC) are enriched in polar residues. The residue at position 634 (Ser-634) is a Phosphoserine.

Belongs to the TRAFAC class myosin-kinesin ATPase superfamily. Kinesin family. Expressed in the liver.

Its subcellular location is the cytoplasm. The protein resides in the cytoskeleton. This chain is Kinesin-like protein KIF12 (Kif12), found in Mus musculus (Mouse).